We begin with the raw amino-acid sequence, 344 residues long: Trace amine-associated receptor 8a (344 aa).

The Extracellular segment spans residues 1-33; it reads MTSNFSQAPLQLCYENVNASCIKTPYSPGLRVL. 2 N-linked (GlcNAc...) asparagine glycosylation sites follow: Asn4 and Asn18. Intrachain disulfides connect Cys21/Cys185 and Cys96/Cys189. Residues 34-54 traverse the membrane as a helical segment; that stretch reads LYMVFGFGAVLAVCGNLLVVI. At 55-67 the chain is on the cytoplasmic side; it reads SVLHFKQLHSPAN. The helical transmembrane segment at 68–88 threads the bilayer; the sequence is FLIASLASADFLVGISVMPFS. Topologically, residues 89–102 are extracellular; sequence MVRSIESCWYFGDT. Residues 103–127 form a helical membrane-spanning segment; it reads FCSLHSCCDAAFCYSSLFHLCFISV. Topologically, residues 128-146 are cytoplasmic; sequence DRYIAVTDPLVYPTKFTVS. A helical transmembrane segment spans residues 147–167; the sequence is VSGICISISWILPLVYSSAVF. The Extracellular portion of the chain corresponds to 168-196; it reads YTGISATGIENLVSALNCVGGCQIVVNQD. Residues 197–217 traverse the membrane as a helical segment; it reads WVLIDFLLFLIPTLVMIILYS. At 218 to 260 the chain is on the cytoplasmic side; that stretch reads KIFLVAKQQAVKIETSISGSKGESSLESHKARVAKRERKAAKT. Residues 261–281 traverse the membrane as a helical segment; it reads LGVTVVAFMVSWLPYTIDTLI. The Extracellular segment spans residues 282–291; sequence DAFMGFITPA. Residues 292–314 form a helical membrane-spanning segment; the sequence is YVYEICCWSAYYNSAMNPLIYAF. Residues 315-344 are Cytoplasmic-facing; that stretch reads FYPWFRKAIKLILSGEILKSHSSTMSLFSE.

It belongs to the G-protein coupled receptor 1 family.

The protein resides in the cell membrane. Its function is as follows. Olfactory receptor activated by trace amines. Trace amine compounds are enriched in animal body fluids and act on trace amine-associated receptors (TAARs) to elicit both intraspecific and interspecific innate behaviors. Ligand-binding causes a conformation change that triggers signaling via G(s)-class of G alpha proteins (GNAL or GNAS). In Rattus norvegicus (Rat), this protein is Trace amine-associated receptor 8a.